Here is a 235-residue protein sequence, read N- to C-terminus: 5'-methylthioadenosine/S-adenosylhomocysteine nucleosidase (235 aa).

Residue Glu-13 is the Proton acceptor of the active site. Substrate-binding positions include Gly-79, Met-154, and 175 to 176 (ME). The Proton donor role is filled by Asp-199.

Belongs to the PNP/UDP phosphorylase family. MtnN subfamily.

The enzyme catalyses S-adenosyl-L-homocysteine + H2O = S-(5-deoxy-D-ribos-5-yl)-L-homocysteine + adenine. The catalysed reaction is S-methyl-5'-thioadenosine + H2O = 5-(methylsulfanyl)-D-ribose + adenine. It catalyses the reaction 5'-deoxyadenosine + H2O = 5-deoxy-D-ribose + adenine. The protein operates within amino-acid biosynthesis; L-methionine biosynthesis via salvage pathway; S-methyl-5-thio-alpha-D-ribose 1-phosphate from S-methyl-5'-thioadenosine (hydrolase route): step 1/2. In terms of biological role, catalyzes the irreversible cleavage of the glycosidic bond in both 5'-methylthioadenosine (MTA) and S-adenosylhomocysteine (SAH/AdoHcy) to adenine and the corresponding thioribose, 5'-methylthioribose and S-ribosylhomocysteine, respectively. Also cleaves 5'-deoxyadenosine, a toxic by-product of radical S-adenosylmethionine (SAM) enzymes, into 5-deoxyribose and adenine. In Chromohalobacter salexigens (strain ATCC BAA-138 / DSM 3043 / CIP 106854 / NCIMB 13768 / 1H11), this protein is 5'-methylthioadenosine/S-adenosylhomocysteine nucleosidase.